Here is a 742-residue protein sequence, read N- to C-terminus: Collectin-12 (742 aa).

The Cytoplasmic segment spans residues 1–37 (MKDDFAEEEEVQSFGYKRFGIQEGTQCTKCKNNWALK). The chain crosses the membrane as a helical; Signal-anchor for type II membrane protein span at residues 38 to 58 (FSIILLYVLCALLTITVAILG). Topologically, residues 59–742 (YKVVEKMDTV…EREAVPSSIL (684 aa)) are extracellular. Residues 104–142 (TNSELSTFRSDILDLRQQLQEITEKTSKNKDMLEKLQAN) adopt a coiled-coil conformation. N159, N168, and N271 each carry an N-linked (GlcNAc...) asparagine glycan. A coiled-coil region spans residues 220 to 301 (ITNLQRSVDD…SFTGQMDNIT (82 aa)). The tract at residues 439-608 (TILQGPPGPR…TPASEVNGCP (170 aa)) is disordered. Collagen-like domains lie at 452–511 (GDRG…KGSR) and 527–586 (GPPG…PGPS). Residues 501 to 514 (SKGSQGPKGSRGSP) show a composition bias toward low complexity. Positions 516 to 532 (KPGPQGPSGDPGPPGPP) are enriched in pro residues. The segment covering 534-556 (KDGLPGPQGPPGFQGLQGTVGEP) has biased composition (low complexity). A compositionally biased stretch (pro residues) spans 571-585 (PGMPGPKGPPGPPGP). 3 cysteine pairs are disulfide-bonded: C607–C618, C635–C730, and C708–C722. One can recognise a C-type lectin domain in the interval 614-731 (FTDKCYYFSV…CDEINNFICE (118 aa)). Residues F644, N646, E650, D670, and E674 each coordinate Ca(2+). The a carbohydrate site is built by K691, Q694, and D696. Ca(2+) is bound by residues Q694, D696, N697, E706, D707, N718, D719, and E731. An a carbohydrate-binding site is contributed by E706. Positions 718 and 719 each coordinate a carbohydrate.

As to quaternary structure, the extracellular domain forms a stable trimer. The extracellular domain interacts with fibrillar amyloid-beta peptide. As to expression, highly expressed in lung, spleen, small and large intestine, stomach and brain. Expressed in neonatal microglia.

Its subcellular location is the membrane. Its function is as follows. Scavenger receptor that displays several functions associated with host defense. Promotes binding and phagocytosis of Gram-positive, Gram-negative bacteria and yeast. Mediates the recognition, internalization and degradation of oxidatively modified low density lipoprotein (oxLDL) by vascular endothelial cells. Binds to several carbohydrates including Gal-type ligands, D-galactose, L- and D-fucose, GalNAc, T and Tn antigens in a calcium-dependent manner and internalizes specifically GalNAc in nurse-like cells. Also binds to sialyl Lewis X or a trisaccharide and asialo-orosomucoid (ASOR). This Rattus norvegicus (Rat) protein is Collectin-12 (Colec12).